The sequence spans 100 residues: Large ribosomal subunit protein eL21 (100 aa).

The disordered stretch occupies residues Met-1–Arg-21.

This sequence belongs to the eukaryotic ribosomal protein eL21 family.

The sequence is that of Large ribosomal subunit protein eL21 from Pyrobaculum islandicum (strain DSM 4184 / JCM 9189 / GEO3).